The chain runs to 228 residues: uncharacterized protein (228 aa).

This is an uncharacterized protein from Archaeoglobus fulgidus (strain ATCC 49558 / DSM 4304 / JCM 9628 / NBRC 100126 / VC-16).